Reading from the N-terminus, the 1714-residue chain is Intersectin-1 (1714 aa).

One can recognise an EH 1 domain in the interval 21–109 (ERAKHDQQFL…PVMKQQPVAI (89 aa)). The region spanning 53–88 (LPQPVLAQIWALADMNNDGRMDQVEFSIAMKLIKLK) is the EF-hand 1 domain. Residues Asp66, Asn68, Asp70, Arg72, and Glu77 each coordinate Ca(2+). At Ser203 the chain carries Phosphoserine. Positions 221-310 (SRLKYRQLFN…PEYIPPSFRR (90 aa)) constitute an EH 2 domain. Residues 254 to 289 (LPQAQLASIWNLSDIDQDGKLTAEEFILAMHLIDVA) enclose the EF-hand 2 domain. Ca(2+) contacts are provided by Asp267, Asp269, Asp271, Lys273, and Glu278. Over residues 310-325 (RVRSGSGMSVISSSSV) the composition is skewed to low complexity. Disordered regions lie at residues 310 to 356 (RVRS…KREN) and 614 to 706 (SKQQ…QSRL). Ser318, Ser334, and Ser335 each carry phosphoserine. Residues 326 to 702 (DQRLPEEPSS…ERAKPEMQDK (377 aa)) form a KLERQ region. Composition is skewed to basic and acidic residues over residues 340–356 (QPEK…KREN) and 622–706 (RSLE…QSRL). Positions 354–658 (RENFERGSVE…QRRVQERDKQ (305 aa)) form a coiled coil. Ser685 carries the post-translational modification Phosphoserine. Residues 738–799 (VKVVYYRALY…PANYAEKIPE (62 aa)) enclose the SH3 1 domain. Residues 827–863 (APLPVTSSEPSTTPNNWADFSSTWPSSSNEKPETDNW) are disordered. The segment covering 831 to 855 (VTSSEPSTTPNNWADFSSTWPSSSN) has biased composition (polar residues). Position 890 is a phosphothreonine (Thr890). A phosphoserine mark is found at Ser894, Ser895, and Ser897. One can recognise an SH3 2 domain in the interval 906–964 (VEGLQAQALYPWRAKKDNHLNFNKSDVITVLEQQDMWWFGEVQGQKGWFPKSYVKLISG). Phosphoserine is present on Ser971. The residue at position 977 (Thr977) is a Phosphothreonine. Phosphoserine is present on residues Ser979 and Ser988. SH3 domains lie at 995 to 1053 (IPGE…LKDS) and 1067 to 1131 (KKPE…LLSP). Residues 1067-1131 (KKPEIAQVIA…PANYVKLLSP (65 aa)) form a required for interaction with FCHSD2 region. Residues 1097 to 1120 (RKKNPGGWWEGELQARGKKRQIGW) carry the Bipartite nuclear localization signal; in isoform 2 motif. Position 1130 is a phosphoserine (Ser1130). Residue Thr1137 is modified to Phosphothreonine. In terms of domain architecture, SH3 5 spans 1148–1207 (PAVCQVIGMYDYTAQNDDELAFSKGQIINVLNKEDPDWWKGEVSGQVGLFPSNYVKLTTD). The region spanning 1230 to 1416 (KRQGYIHELI…EELCSQVNEG (187 aa)) is the DH domain. In terms of domain architecture, PH spans 1455 to 1564 (KFLHSGKLYK…WVQKIKAASE (110 aa)). Positions 1572–1688 (KKREKAYLVR…KKDQGSKGPV (117 aa)) constitute a C2 domain. Position 1638 is a phosphoserine (Ser1638). The Ca(2+) site is built by Asp1660, Ser1663, and Asp1666.

In terms of assembly, interacts (via DH domain) with CDC42. Interacts (via SH3 domain 1) with WASL. Interacts with dynamin, SNAP25 and SNAP23. Interacts with clathrin-associated proteins and other components of the endocytic machinery, such as SPIN90, EPS15, EPN1, EPN2, STON2, FCHO1, FCHO2 and DAB2. Interacts (via SH3 domains) with REPS1 and SGIP1. Interacts with ARHGAP31. Interacts with ADAM15. Interacts with PRRT2. Interacts (via SH3 domain 4) with FCHSD2 (via SH3 domain 2). Interacts (via SH3 domain 1) with DENND2B. Interacts (via SH3 domains) with CBL. Isoform 2: Interacts with CBL and DNM1. Isoform 2: Interacts with LMNA. Isoform 2: Interacts with importin subunit KPNA1; this is likely to mediate its import into the nucleus. Interacts with DNM2. Requires Ca(2+) as cofactor. Detected in brain, adrenal gland and heart. Detected in neurons at the calyx of Held (at protein level). Isoform 1: Primarily detected in brain neurons. Isoform 2: Primarily detected in glia (at protein level). Widely expressed. Expressed at high levels in brain, heart and skeletal muscle.

Its subcellular location is the endomembrane system. The protein resides in the synapse. It is found in the synaptosome. It localises to the cell projection. The protein localises to the lamellipodium. Its subcellular location is the cell membrane. The protein resides in the membrane. It is found in the clathrin-coated pit. It localises to the recycling endosome. The protein localises to the endosome. Its subcellular location is the cytoplasmic vesicle. The protein resides in the cytoplasm. It is found in the nucleus envelope. Adapter protein that provides a link between the endocytic membrane traffic and the actin assembly machinery. Acts as a guanine nucleotide exchange factor (GEF) for CDC42, and thereby stimulates actin nucleation mediated by WASL and the ARP2/3 complex. Plays a role in the assembly and maturation of clathrin-coated vesicles. Recruits FCHSD2 to clathrin-coated pits. Involved in endocytosis of activated EGFR, and probably also other growth factor receptors. Involved in endocytosis of integrin beta-1 (ITGB1) and transferrin receptor (TFR); internalization of ITGB1 as DAB2-dependent cargo but not TFR may involve association with DAB2. Promotes ubiquitination and subsequent degradation of EGFR, and thereby contributes to the down-regulation of EGFR-dependent signaling pathways. In chromaffin cells, required for normal exocytosis of catecholamines. Required for rapid replenishment of release-ready synaptic vesicles at presynaptic active zones. Inhibits ARHGAP31 activity toward RAC1. In terms of biological role, plays a role in synaptic vesicle endocytosis in brain neurons. This chain is Intersectin-1, found in Mus musculus (Mouse).